The following is a 392-amino-acid chain: Solute carrier family 35 member B1 (392 aa).

Positions 1–40 (MSLTKKIKNEKSLKQEKQTDQLKSNLRNNNNNINNKSKPK) are disordered. The span at 7–20 (IKNEKSLKQEKQTD) shows a compositional bias: basic and acidic residues. Over residues 25–35 (NLRNNNNNINN) the composition is skewed to low complexity. Helical transmembrane passes span 57–77 (ELFFIFCVGGIYIFYLLYGLV), 97–117 (AFLLALQCFFNMVSAWLVSLV), 124–144 (NTPFMKYGFVSMLLVISTFLS), 155–175 (TQVLAKSCKPIPVIFMGLLLF), 179–199 (YPFLKYIVVIVISLGISLFML), 215–235 (HLFGNFILFVSLMMDGVMGPF), 247–267 (ATSMMLNTNIWNLGLFSIMAF), 285–305 (VIKLILAFCITSAIGQQFIFL), and 341–361 (LQWAAICMVFGGLILDLYISY). The short motif at 389-392 (KKSL) is the Di-lysine motif element.

Belongs to the nucleotide-sugar transporter family. SLC35B subfamily.

The protein resides in the endoplasmic reticulum membrane. Its function is as follows. Probable sugar transporter. The polypeptide is Solute carrier family 35 member B1 (slc35b1) (Dictyostelium discoideum (Social amoeba)).